The sequence spans 544 residues: Chaperonin GroEL (544 aa).

ATP is bound by residues threonine 30–proline 33, lysine 51, aspartate 87–threonine 91, glycine 415, and aspartate 495.

Belongs to the chaperonin (HSP60) family. In terms of assembly, forms a cylinder of 14 subunits composed of two heptameric rings stacked back-to-back. Interacts with the co-chaperonin GroES.

It is found in the cell outer membrane. It catalyses the reaction ATP + H2O + a folded polypeptide = ADP + phosphate + an unfolded polypeptide.. In terms of biological role, together with its co-chaperonin GroES, plays an essential role in assisting protein folding. The GroEL-GroES system forms a nano-cage that allows encapsulation of the non-native substrate proteins and provides a physical environment optimized to promote and accelerate protein folding. The chain is Chaperonin GroEL from Neisseria gonorrhoeae.